We begin with the raw amino-acid sequence, 173 residues long: NADH-ubiquinone oxidoreductase chain 6 (173 aa).

5 helical membrane passes run 1–21, 27–47, 48–68, 88–108, and 139–159; these read MTYL…AVAS, YGVV…LSLG, VSFV…VVFV, VGYG…GGLI, and YGVG…FVVL.

This sequence belongs to the complex I subunit 6 family.

Its subcellular location is the mitochondrion membrane. The catalysed reaction is a ubiquinone + NADH + 5 H(+)(in) = a ubiquinol + NAD(+) + 4 H(+)(out). Functionally, core subunit of the mitochondrial membrane respiratory chain NADH dehydrogenase (Complex I) that is believed to belong to the minimal assembly required for catalysis. Complex I functions in the transfer of electrons from NADH to the respiratory chain. The immediate electron acceptor for the enzyme is believed to be ubiquinone. The sequence is that of NADH-ubiquinone oxidoreductase chain 6 (MT-ND6) from Calidris maritima (Purple sandpiper).